We begin with the raw amino-acid sequence, 297 residues long: 4-diphosphocytidyl-2-C-methyl-D-erythritol kinase (297 aa).

Lysine 10 is a catalytic residue. 94–104 (PVAAGLAGGSS) is an ATP binding site. The active site involves aspartate 136.

This sequence belongs to the GHMP kinase family. IspE subfamily.

The catalysed reaction is 4-CDP-2-C-methyl-D-erythritol + ATP = 4-CDP-2-C-methyl-D-erythritol 2-phosphate + ADP + H(+). It participates in isoprenoid biosynthesis; isopentenyl diphosphate biosynthesis via DXP pathway; isopentenyl diphosphate from 1-deoxy-D-xylulose 5-phosphate: step 3/6. Catalyzes the phosphorylation of the position 2 hydroxy group of 4-diphosphocytidyl-2C-methyl-D-erythritol. This chain is 4-diphosphocytidyl-2-C-methyl-D-erythritol kinase, found in Shouchella clausii (strain KSM-K16) (Alkalihalobacillus clausii).